The chain runs to 764 residues: Probable glutamate--tRNA ligase, cytoplasmic (764 aa).

L-glutamate is bound at residue 228–230 (RFP). The 'HIGH' region motif lies at 233–242 (PSGYMHIGHC). His-238 contacts ATP. Residues Asp-264, 404 to 408 (YDFAC), and Arg-422 contribute to the L-glutamate site. Residues Glu-425 and 460-464 (LLSKR) each bind ATP. The 'KMSKS' region signature appears at 460–464 (LLSKR).

Belongs to the class-I aminoacyl-tRNA synthetase family. Glutamate--tRNA ligase type 2 subfamily.

It is found in the cytoplasm. It catalyses the reaction tRNA(Glu) + L-glutamate + ATP = L-glutamyl-tRNA(Glu) + AMP + diphosphate. Its function is as follows. Catalyzes the attachment of glutamate to tRNA(Glu) in a two-step reaction: glutamate is first activated by ATP to form Glu-AMP and then transferred to the acceptor end of tRNA(Glu). In Dictyostelium discoideum (Social amoeba), this protein is Probable glutamate--tRNA ligase, cytoplasmic (gluS).